The chain runs to 428 residues: Homoserine dehydrogenase (428 aa).

Phe-10, Thr-12, Val-13, Arg-44, and Lys-106 together coordinate NADPH. Residue Val-13 participates in NAD(+) binding. Val-13, Arg-44, and Lys-106 together coordinate NADP(+). Glu-130, Val-133, Gly-135, and Ile-137 together coordinate Na(+). NADP(+) contacts are provided by Gly-188 and Glu-191. Residues Glu-191 and Asp-202 each coordinate L-homoserine. Catalysis depends on Lys-206, which acts as the Proton donor. Gly-303 is an NADPH binding site. Gly-303 contacts NAD(+). Gly-303 is a binding site for NADP(+). Residues 351 to 425 (YFSVETPDST…DFKLLNYFKV (75 aa)) form the ACT domain.

Belongs to the homoserine dehydrogenase family. It depends on a metal cation as a cofactor.

It carries out the reaction L-homoserine + NADP(+) = L-aspartate 4-semialdehyde + NADPH + H(+). The enzyme catalyses L-homoserine + NAD(+) = L-aspartate 4-semialdehyde + NADH + H(+). It participates in amino-acid biosynthesis; L-methionine biosynthesis via de novo pathway; L-homoserine from L-aspartate: step 3/3. The protein operates within amino-acid biosynthesis; L-threonine biosynthesis; L-threonine from L-aspartate: step 3/5. Catalyzes the conversion of L-aspartate-beta-semialdehyde (L-Asa) to L-homoserine (L-Hse), the third step in the biosynthesis of threonine and methionine from aspartate. The polypeptide is Homoserine dehydrogenase (hom) (Lactococcus lactis subsp. lactis (strain IL1403) (Streptococcus lactis)).